Consider the following 126-residue polypeptide: MRARRGFILLLLLAVLCSTGVSLRCYNCLDPVSSCKTNSTCSPNLDACLVAVSGKQVYQQCWRFSDCNAKFILSRLEIANVQYRCCQADLCNKSFEDKPNNGAISLLGKTALLVTSVLAAILKPCF.

Residues 1 to 22 (MRARRGFILLLLLAVLCSTGVS) form the signal peptide. One can recognise a UPAR/Ly6 domain in the interval 23–110 (LRCYNCLDPV…NGAISLLGKT (88 aa)). Cystine bridges form between Cys-25-Cys-48, Cys-28-Cys-35, Cys-41-Cys-61, Cys-67-Cys-85, and Cys-86-Cys-91. Asn-38 is a glycosylation site (N-linked (GlcNAc...) asparagine). Asn-101 carries GPI-anchor amidated asparagine lipidation. Residues 102-126 (GAISLLGKTALLVTSVLAAILKPCF) constitute a propeptide, removed in mature form.

Interacts with T-cell surface antigen CD2. N- and O-glycosylated.

Its subcellular location is the cell membrane. It localises to the secreted. Potent inhibitor of the complement membrane attack complex (MAC) action, which protects self-cells from damage during complement activation. Acts by binding to the beta-haipins of C8 (C8A and C8B) components of the assembling MAC, forming an intermolecular beta-sheet that prevents incorporation of the multiple copies of C9 required for complete formation of the osmolytic pore. The sequence is that of CD59 glycoprotein from Rattus norvegicus (Rat).